Consider the following 303-residue polypeptide: Polyisoprenyl-teichoic acid--peptidoglycan teichoic acid transferase TagU (303 aa).

Residues 1-4 (MKKK) lie on the Cytoplasmic side of the membrane. A helical; Signal-anchor for type II membrane protein transmembrane segment spans residues 5–25 (ILFWVLGILGVLIIGGGIYAY). The Extracellular portion of the chain corresponds to 26-303 (NVYSSVSNTL…KLRTHLEVTK (278 aa)).

This sequence belongs to the LytR/CpsA/Psr (LCP) family.

Its subcellular location is the cell membrane. Its pathway is cell wall biogenesis. May catalyze the final step in cell wall teichoic acid biosynthesis, the transfer of the anionic cell wall polymers (APs) from their lipid-linked precursor to the cell wall peptidoglycan (PG). This chain is Polyisoprenyl-teichoic acid--peptidoglycan teichoic acid transferase TagU, found in Bacillus cereus (strain ZK / E33L).